The primary structure comprises 388 residues: Succinate--CoA ligase [ADP-forming] subunit beta (388 aa).

The ATP-grasp domain maps to 9–244; that stretch reads KAIFRSMGVA…LEEEDPKEIE (236 aa). ATP-binding positions include Lys46, 53–55, Glu99, Cys102, and Glu107; that span reads GRG. Positions 199 and 213 each coordinate Mg(2+). Residues Asn264 and 321–323 contribute to the substrate site; that span reads GIM.

This sequence belongs to the succinate/malate CoA ligase beta subunit family. As to quaternary structure, heterotetramer of two alpha and two beta subunits. Mg(2+) serves as cofactor.

It catalyses the reaction succinate + ATP + CoA = succinyl-CoA + ADP + phosphate. The enzyme catalyses GTP + succinate + CoA = succinyl-CoA + GDP + phosphate. It participates in carbohydrate metabolism; tricarboxylic acid cycle; succinate from succinyl-CoA (ligase route): step 1/1. Its function is as follows. Succinyl-CoA synthetase functions in the citric acid cycle (TCA), coupling the hydrolysis of succinyl-CoA to the synthesis of either ATP or GTP and thus represents the only step of substrate-level phosphorylation in the TCA. The beta subunit provides nucleotide specificity of the enzyme and binds the substrate succinate, while the binding sites for coenzyme A and phosphate are found in the alpha subunit. The chain is Succinate--CoA ligase [ADP-forming] subunit beta from Staphylococcus saprophyticus subsp. saprophyticus (strain ATCC 15305 / DSM 20229 / NCIMB 8711 / NCTC 7292 / S-41).